The sequence spans 103 residues: Flagellar hook-basal body complex protein FliE (103 aa).

This sequence belongs to the FliE family.

It localises to the bacterial flagellum basal body. The chain is Flagellar hook-basal body complex protein FliE from Photorhabdus laumondii subsp. laumondii (strain DSM 15139 / CIP 105565 / TT01) (Photorhabdus luminescens subsp. laumondii).